A 336-amino-acid chain; its full sequence is Phosphate acyltransferase (336 aa).

The protein belongs to the PlsX family. In terms of assembly, homodimer. Probably interacts with PlsY.

It localises to the cytoplasm. It carries out the reaction a fatty acyl-[ACP] + phosphate = an acyl phosphate + holo-[ACP]. Its pathway is lipid metabolism; phospholipid metabolism. Catalyzes the reversible formation of acyl-phosphate (acyl-PO(4)) from acyl-[acyl-carrier-protein] (acyl-ACP). This enzyme utilizes acyl-ACP as fatty acyl donor, but not acyl-CoA. The chain is Phosphate acyltransferase from Pseudomonas paraeruginosa (strain DSM 24068 / PA7) (Pseudomonas aeruginosa (strain PA7)).